The sequence spans 104 residues: Large ribosomal subunit protein bL21 (104 aa).

It belongs to the bacterial ribosomal protein bL21 family. As to quaternary structure, part of the 50S ribosomal subunit. Contacts protein L20.

In terms of biological role, this protein binds to 23S rRNA in the presence of protein L20. This chain is Large ribosomal subunit protein bL21, found in Pseudomonas entomophila (strain L48).